The following is a 384-amino-acid chain: Cysteine protease ATG4B (384 aa).

Cys74 functions as the Nucleophile in the catalytic mechanism. Active-site residues include Asp269 and His271. An LIR motif is present at residues 379–382 (FEIL).

This sequence belongs to the peptidase C54 family.

The protein resides in the cytoplasm. Its subcellular location is the cytosol. The protein localises to the cytoplasmic vesicle. It localises to the autophagosome. It is found in the endoplasmic reticulum. The protein resides in the mitochondrion. It catalyses the reaction [protein]-C-terminal L-amino acid-glycyl-phosphatidylethanolamide + H2O = [protein]-C-terminal L-amino acid-glycine + a 1,2-diacyl-sn-glycero-3-phosphoethanolamine. The catalysed reaction is [protein]-C-terminal L-amino acid-glycyl-phosphatidylserine + H2O = [protein]-C-terminal L-amino acid-glycine + a 1,2-diacyl-sn-glycero-3-phospho-L-serine. In terms of biological role, cysteine protease that plays a key role in autophagy by mediating both proteolytic activation and delipidation of ATG8 family proteins. Required for canonical autophagy (macroautophagy), non-canonical autophagy as well as for mitophagy. The protease activity is required for proteolytic activation of ATG8 family proteins: cleaves the C-terminal amino acid of ATG8 proteins to reveal a C-terminal glycine. Exposure of the glycine at the C-terminus is essential for ATG8 proteins conjugation to phosphatidylethanolamine (PE) and insertion to membranes, which is necessary for autophagy. Protease activity is also required to counteract formation of high-molecular weight conjugates of ATG8 proteins (ATG8ylation): acts as a deubiquitinating-like enzyme that removes ATG8 conjugated to other proteins, such as ATG3. In addition to the protease activity, also mediates delipidation of ATG8 family proteins. Catalyzes delipidation of PE-conjugated forms of ATG8 proteins during macroautophagy. Also involved in non-canonical autophagy, a parallel pathway involving conjugation of ATG8 proteins to single membranes at endolysosomal compartments, by catalyzing delipidation of ATG8 proteins conjugated to phosphatidylserine (PS). The sequence is that of Cysteine protease ATG4B from Xenopus laevis (African clawed frog).